A 334-amino-acid polypeptide reads, in one-letter code: Large ribosomal subunit protein uL3 (334 aa).

The span at 1-10 (MGMKKSRPRR) shows a compositional bias: basic residues. Positions 1 to 20 (MGMKKSRPRRGSLAFSPRKR) are disordered.

The protein belongs to the universal ribosomal protein uL3 family. In terms of assembly, part of the 50S ribosomal subunit. Forms a cluster with proteins L14 and L24e.

Its function is as follows. One of the primary rRNA binding proteins, it binds directly near the 3'-end of the 23S rRNA, where it nucleates assembly of the 50S subunit. The protein is Large ribosomal subunit protein uL3 of Methanococcus maripaludis (strain C7 / ATCC BAA-1331).